Reading from the N-terminus, the 806-residue chain is Mitochondrial intermediate peptidase (806 aa).

A mitochondrion-targeting transit peptide spans 1-29; that stretch reads MLSRHLTVLRSACRVSHDLRVPSTQAVRK. His581 is a Zn(2+) binding site. Residue Glu582 is part of the active site. Positions 585 and 588 each coordinate Zn(2+).

It belongs to the peptidase M3 family. The cofactor is Zn(2+).

It localises to the mitochondrion matrix. It carries out the reaction Release of an N-terminal octapeptide as second stage of processing of some proteins imported into the mitochondrion.. In terms of biological role, cleaves proteins, imported into the mitochondrion, to their mature size. While most mitochondrial precursor proteins are processed to the mature form in one step by mitochondrial processing peptidase (MPP), the sequential cleavage by MIP of an octapeptide after initial processing by MPP is a required step for a subgroup of nuclear-encoded precursor proteins destined for the matrix or the inner membrane. This Malassezia globosa (strain ATCC MYA-4612 / CBS 7966) (Dandruff-associated fungus) protein is Mitochondrial intermediate peptidase (OCT1).